The chain runs to 100 residues: Urease subunit gamma (100 aa).

The protein belongs to the urease gamma subunit family. In terms of assembly, heterotrimer of UreA (gamma), UreB (beta) and UreC (alpha) subunits. Three heterotrimers associate to form the active enzyme.

The protein localises to the cytoplasm. The enzyme catalyses urea + 2 H2O + H(+) = hydrogencarbonate + 2 NH4(+). Its pathway is nitrogen metabolism; urea degradation; CO(2) and NH(3) from urea (urease route): step 1/1. The chain is Urease subunit gamma from Synechococcus sp. (strain RCC307).